Reading from the N-terminus, the 47-residue chain is Large ribosomal subunit protein bL34 (47 aa).

It belongs to the bacterial ribosomal protein bL34 family.

This chain is Large ribosomal subunit protein bL34, found in Mycobacterium avium (strain 104).